A 536-amino-acid polypeptide reads, in one-letter code: Bicoumarin synthase desC (536 aa).

Residues 12–32 traverse the membrane as a helical segment; it reads YVALAGITGFFLVFLGFLVVI. Residues N149 and N371 are each glycosylated (N-linked (GlcNAc...) asparagine). C480 contributes to the heme binding site.

Belongs to the cytochrome P450 family. It depends on heme as a cofactor.

It localises to the membrane. The catalysed reaction is 2 7-demethylsiderin + NADPH + O2 = desertorin A + NADP(+) + 2 H2O. Its pathway is secondary metabolite biosynthesis. Its function is as follows. Non-reducing polyketide synthase; part of the gene cluster that mediates the biosynthesis of the bicoumarin desertorin. The non-reducing polyketide synthase desS first catalyzes the formation of the pentaketidic 4,7-dihydroxy-5-methylcoumarin from acetyl coenzyme A and 4 malonyl coenzyme A molecules. Further O-methylation by desB leads to the formation of 7-demethylsiderin. Then, an oxidative phenol coupling catalyzed by the cytochrome P450 monooxygenase desC forms the 6,8'-dimer M-desertorin A via dimerization the monomeric precursor, 7-demethylsiderin. M-desertorin A is further converted to M-desertorin C. In Aspergillus desertorum (Emericella desertorum), this protein is Bicoumarin synthase desC.